A 461-amino-acid polypeptide reads, in one-letter code: Phytase PHO112 (461 aa).

Cystine bridges form between cysteine 62-cysteine 384, cysteine 261-cysteine 274, and cysteine 404-cysteine 412. 4 residues coordinate 1D-myo-inositol hexakisphosphate: arginine 72, histidine 73, arginine 76, and serine 79. Histidine 73 functions as the Nucleophile in the catalytic mechanism. N-linked (GlcNAc...) asparagine glycans are attached at residues asparagine 97 and asparagine 157. Arginine 169 lines the 1D-myo-inositol hexakisphosphate pocket. Asparagine 229 and asparagine 248 each carry an N-linked (GlcNAc...) asparagine glycan. Residue lysine 293 coordinates 1D-myo-inositol hexakisphosphate. Residues asparagine 302 and asparagine 313 are each glycosylated (N-linked (GlcNAc...) asparagine). 2 residues coordinate 1D-myo-inositol hexakisphosphate: histidine 334 and aspartate 335. N-linked (GlcNAc...) asparagine glycosylation is found at asparagine 437 and asparagine 452.

It belongs to the histidine acid phosphatase family. In terms of assembly, monomer.

It localises to the secreted. The catalysed reaction is 1D-myo-inositol hexakisphosphate + H2O = 1D-myo-inositol 1,2,4,5,6-pentakisphosphate + phosphate. The enzyme catalyses 1D-myo-inositol 1,2,4,5,6-pentakisphosphate + H2O = 1D-myo-inositol 1,2,5,6-tetrakisphosphate + phosphate. It catalyses the reaction 1D-myo-inositol 1,2,5,6-tetrakisphosphate + H2O = 1D-myo-inositol 1,2,6-trisphosphate + phosphate. It carries out the reaction 1D-myo-inositol 1,2,6-trisphosphate + H2O = 1D-myo-inositol 1,2-bisphosphate + phosphate. The catalysed reaction is 1D-myo-inositol 1,2-bisphosphate + H2O = 1D-myo-inositol 2-phosphate + phosphate. Catalyzes the phosphate monoester hydrolysis of phytic acid (myo-inositol hexakisphosphate), which results in the stepwise formation of myo-inositol pentakis-, tetrakis-, tris-, bis-, and monophosphates, as well as the liberation of inorganic phosphate. Myo-inositol 2-monophosphate is the end product. Responsible of about 25% of the phytase activity. The residual phytase activity might be contributed by other cytosolic or cellular enzymes such as acid phosphatase that also degraded the substrate phytate. Is essential for human tissue damage during infection. The protein is Phytase PHO112 (PHO112) of Candida albicans (strain SC5314 / ATCC MYA-2876) (Yeast).